A 479-amino-acid polypeptide reads, in one-letter code: Signal recognition particle subunit SRP54 1 (479 aa).

The G-domain stretch occupies residues 1-295 (MVLAELGGRI…DVKPFVSRLL (295 aa)). Residues 108–115 (GLQGAGKT), 190–194 (DTSGR), and 248–251 (TKMD) contribute to the GTP site. The M-domain stretch occupies residues 296–479 (GKGDWSGLVD…MMGMFGGGGK (184 aa)).

This sequence belongs to the GTP-binding SRP family. SRP54 subfamily. As to quaternary structure, component of a signal recognition particle (SRP) complex that consists of a 7SL RNA molecule of 300 nucleotides and six protein subunits: SRP72, SRP68, SRP54, SRP19, SRP14 and SRP9.

The protein resides in the cytoplasm. It is found in the endoplasmic reticulum. It catalyses the reaction GTP + H2O = GDP + phosphate + H(+). Component of the signal recognition particle (SRP) complex, a ribonucleoprotein complex that mediates the cotranslational targeting of secretory and membrane proteins to the endoplasmic reticulum (ER). As part of the SRP complex, associates with the SRP receptor (SR) component SRPRA to target secretory proteins to the endoplasmic reticulum membrane. Binds to the signal sequence of presecretory proteins when they emerge from the ribosomes. Displays basal GTPase activity, and stimulates reciprocal GTPase activation of the SR subunit SRPRA. Forms a guanosine 5'-triphosphate (GTP)-dependent complex with the SR subunit SRPRA. SR compaction and GTPase mediated rearrangement of SR drive SRP-mediated cotranslational protein translocation into the ER. Requires the presence of SRP9/SRP14 and/or SRP19 to stably interact with RNA. The protein is Signal recognition particle subunit SRP54 1 (SRP-54A) of Arabidopsis thaliana (Mouse-ear cress).